Here is a 213-residue protein sequence, read N- to C-terminus: Ribosomal RNA small subunit methyltransferase G (213 aa).

S-adenosyl-L-methionine is bound by residues glycine 75, phenylalanine 80, isoleucine 128–glutamate 129, and arginine 144.

The protein belongs to the methyltransferase superfamily. RNA methyltransferase RsmG family.

The protein localises to the cytoplasm. The enzyme catalyses guanosine(527) in 16S rRNA + S-adenosyl-L-methionine = N(7)-methylguanosine(527) in 16S rRNA + S-adenosyl-L-homocysteine. In terms of biological role, specifically methylates the N7 position of guanine in position 527 of 16S rRNA. This is Ribosomal RNA small subunit methyltransferase G from Brucella abortus (strain S19).